The sequence spans 261 residues: Cytochrome c oxidase subunit 3 (261 aa).

Topologically, residues 1–15 (MTHQTHAYHMVNPSP) are mitochondrial matrix. The chain crosses the membrane as a helical span at residues 16-34 (WPLTGALSALLMTSGLIMW). Residues 35–40 (FHFNST) lie on the Mitochondrial intermembrane side of the membrane. Residues 41–66 (TLLMLGLTTNMLTMYQWWRDVIREST) form a helical membrane-spanning segment. Residues 67-72 (FQGHHT) lie on the Mitochondrial matrix side of the membrane. Residues 73 to 105 (PNVQKGLRYGMILFIISEVLFFTGFFWAFYHSS) traverse the membrane as a helical segment. The Mitochondrial intermembrane segment spans residues 106-128 (LAPTPELGGCWPPTGINPLNPLE). Residues 129–152 (VPLLNTSVLLASGVSITWAHHSLM) traverse the membrane as a helical segment. The Mitochondrial matrix portion of the chain corresponds to 153–155 (EGN). Residues 156–183 (RNHMLQALFITIALGVYFTLLQASEYYE) form a helical membrane-spanning segment. Residues 184 to 190 (APFTISD) are Mitochondrial intermembrane-facing. Residues 191–223 (GVYGSTFFVATGFHGLHVIIGSTFLIVCFFRQL) traverse the membrane as a helical segment. At 224–232 (KFHFTSNHH) the chain is on the mitochondrial matrix side. Residues 233 to 256 (FGFEAAAWYWHFVDVVWLFLYVSI) form a helical membrane-spanning segment. Residues 257–261 (YWWGS) are Mitochondrial intermembrane-facing.

This sequence belongs to the cytochrome c oxidase subunit 3 family. As to quaternary structure, component of the cytochrome c oxidase (complex IV, CIV), a multisubunit enzyme composed of 14 subunits. The complex is composed of a catalytic core of 3 subunits MT-CO1, MT-CO2 and MT-CO3, encoded in the mitochondrial DNA, and 11 supernumerary subunits COX4I, COX5A, COX5B, COX6A, COX6B, COX6C, COX7A, COX7B, COX7C, COX8 and NDUFA4, which are encoded in the nuclear genome. The complex exists as a monomer or a dimer and forms supercomplexes (SCs) in the inner mitochondrial membrane with NADH-ubiquinone oxidoreductase (complex I, CI) and ubiquinol-cytochrome c oxidoreductase (cytochrome b-c1 complex, complex III, CIII), resulting in different assemblies (supercomplex SCI(1)III(2)IV(1) and megacomplex MCI(2)III(2)IV(2)).

It is found in the mitochondrion inner membrane. It catalyses the reaction 4 Fe(II)-[cytochrome c] + O2 + 8 H(+)(in) = 4 Fe(III)-[cytochrome c] + 2 H2O + 4 H(+)(out). Functionally, component of the cytochrome c oxidase, the last enzyme in the mitochondrial electron transport chain which drives oxidative phosphorylation. The respiratory chain contains 3 multisubunit complexes succinate dehydrogenase (complex II, CII), ubiquinol-cytochrome c oxidoreductase (cytochrome b-c1 complex, complex III, CIII) and cytochrome c oxidase (complex IV, CIV), that cooperate to transfer electrons derived from NADH and succinate to molecular oxygen, creating an electrochemical gradient over the inner membrane that drives transmembrane transport and the ATP synthase. Cytochrome c oxidase is the component of the respiratory chain that catalyzes the reduction of oxygen to water. Electrons originating from reduced cytochrome c in the intermembrane space (IMS) are transferred via the dinuclear copper A center (CU(A)) of subunit 2 and heme A of subunit 1 to the active site in subunit 1, a binuclear center (BNC) formed by heme A3 and copper B (CU(B)). The BNC reduces molecular oxygen to 2 water molecules using 4 electrons from cytochrome c in the IMS and 4 protons from the mitochondrial matrix. The sequence is that of Cytochrome c oxidase subunit 3 (MT-CO3) from Gazella subgutturosa (Goitred gazelle).